The chain runs to 862 residues: DNA mismatch repair protein MutS (862 aa).

Position 608–615 (608–615 (GPNMAGKS)) interacts with ATP.

This sequence belongs to the DNA mismatch repair MutS family.

Its function is as follows. This protein is involved in the repair of mismatches in DNA. It is possible that it carries out the mismatch recognition step. This protein has a weak ATPase activity. The sequence is that of DNA mismatch repair protein MutS from Borrelia garinii subsp. bavariensis (strain ATCC BAA-2496 / DSM 23469 / PBi) (Borreliella bavariensis).